The chain runs to 834 residues: Protein EFR3 homolog cmp44E (834 aa).

Residues 120-156 (NLFVESFLRMVQKLLEDSNPNLKIMATNSFVKFANIN) form an HEAT repeat. A helical membrane pass occupies residues 595–612 (LHAISIGLLVLISRVSGI).

It belongs to the EFR3 family. Expression during embryogenesis is ubiquitous with notably higher levels in the CNS and brain.

The protein localises to the membrane. An essential gene required for embryogenesis; required for cell viability. The sequence is that of Protein EFR3 homolog cmp44E (stmA) from Drosophila melanogaster (Fruit fly).